Here is an 867-residue protein sequence, read N- to C-terminus: Nuclear body protein SP140 (867 aa).

The HSR domain occupies 22–138 (VAEIQNVEGQ…IYRSFQNVCY (117 aa)). Disordered stretches follow at residues 260–341 (TYST…EEPQ), 365–432 (TPQV…SEEL), and 486–580 (IANN…KHKD). Residues 268–301 (KQGEEEGRNSPRKRNQDKEKYQESPEGRDKETFD) show a composition bias toward basic and acidic residues. Composition is skewed to acidic residues over residues 323 to 341 (EGEE…EEPQ) and 384 to 397 (EGEE…EMCD). A compositionally biased stretch (low complexity) spans 404–416 (ASSSLARRGSVSS). 2 stretches are compositionally biased toward basic residues: residues 494-512 (KPKR…RMRM) and 567-577 (QKRVRSRASRK). A Nuclear localization signal motif is present at residues 495 to 514 (PKRKRRKKRGHGWSRMRMRR). The 82-residue stretch at 580–661 (DETVDFKAPL…RWLMENGFLP (82 aa)) folds into the SAND domain. The PHD-type zinc finger occupies 690–736 (LDECEVCRDGGELFCCDTCSRVFHEDCHIPPVEAERTPWNCIFCRMK). The residue at position 726 (T726) is a Phosphothreonine. The Bromo domain maps to 754–857 (QMCPEEQLKC…AEFEKNFKEV (104 aa)).

Interacts with PIN1. Post-translationally, phosphorylation at Thr-726 promotes binding of PIN1 and subsequent isomerization of Pro-727. As to expression, high levels in spleen and peripheral blood leukocytes, much lower levels in tonsils, thymus, prostate, ovary, small intestine, and colon. Very low levels in heart, brain, placenta, lung, liver, skeletal muscle, kidney, and pancreas. Not detected in brain, liver and muscle.

It is found in the nucleus. It localises to the PML body. The protein localises to the cytoplasm. In terms of biological role, component of the nuclear body, also known as nuclear domain 10, PML oncogenic domain, and KR body. May be involved in the pathogenesis of acute promyelocytic leukemia and viral infection. May play a role in chromatin-mediated regulation of gene expression although it does not bind to histone H3 tails. The polypeptide is Nuclear body protein SP140 (Homo sapiens (Human)).